Reading from the N-terminus, the 704-residue chain is MPVPIIETCRKRKRKPKVYNLQRFGEDGFPIQRNGAFRDQIRVFLRDCAEIEDYDIRGMTVWCTLLSHETKSSLIPLYIVEENVKHSSEPYCDHCRCTGWSNHFVSKRKYHFIIPIDTEWSLPLEDDAFDSQSHVLHGLIHCNGFGHLVCVNGMESGSKYLCGREIVDFWDRLCNSLGARMITVEDLAKKRSVELRLLYGVAYGHSWFGRWGYKFCCGSFGVTKNEYENAIEALGSLEIDQIEFDFGELRQSKEINQVFRYYREMSEGHLKTFRDLLRFMLIIKSHASPQKLLPVTPPLLTDSPHQKRSSRLLLKKSDVADNDKSPKYRNYSTVAANLGSRWPVRRLIFAAEVIVESLKEMKALKQNGMTRQDVRDSARLHIGDTGLLDYVLKSMNNVVVGDVLVRRYVDPITRILHYTIQDLDDAVKAKEPKKKEAVVLEEITPLRILTPLKPGADVYGDLLLLYTNVLLNYPESELVRSATQAILDSKHFIKEWPIWDNNDTVLQFLCRINPSLVDVRSEQTTELPPGELVTVPLQATVYDLKQAIEETFRDTYCILSNFVVTEIDEVEEDMSLIGSCSALTVRGHGIDLESKLKCQGGCDTWMVKCICRARDDDGERMISCDVCEVWQHTRCCGIDDSDTLPPLFVCSNCCEEFAEQQRKVLQPKYEFPSSENVFLLESADDFFGDQRCLGMIFPEENYLL.

Residues 606 to 656 (MVKCICRARDDDGERMISCDVCEVWQHTRCCGIDDSDTLPPLFVCSNCCEE) form a PHD-type zinc finger. Residues Cys609, Cys611, Cys624, Cys627, His632, Cys635, Cys650, and Cys653 each contribute to the Zn(2+) site.

Interacts with JMJ16 in the nucleus of male meiocytes, especially on pachytene chromosomes. Expressed in inflorescence, specifically in male meiocytes.

The protein localises to the nucleus. Its function is as follows. Probable transcription factor required for chromosome organization and progression during male meiosis (e.g. microsporogenesis). Necessary for fertility and meiotic progressive compaction of prophase I chromosomes to metaphase I bivalents. Together with JMJ16, promotes gene expression in male meiocytes in an H3K9me3-dependent manner, and contributes to meiotic chromosome condensation by triggering some condensin promoters (e.g. CAP-D3 and CAP-H). This Arabidopsis thaliana (Mouse-ear cress) protein is PHD finger protein MALE MEIOCYTE DEATH 1.